We begin with the raw amino-acid sequence, 502 residues long: Hexokinase-2 (502 aa).

The helical transmembrane segment at 4–24 (VAVATTVVCSVAVCAAAALIV) threads the bilayer. Positions 35 to 487 (ARVIEILKAF…SGVGAALLAA (453 aa)) constitute a Hexokinase domain. Residues 90 to 228 (SGDETGFFYA…GLDMLVAALV (139 aa)) form a hexokinase small subdomain region. Glycine 104, threonine 105, and asparagine 106 together coordinate ADP. Threonine 194, lysine 195, asparagine 229, and aspartate 230 together coordinate D-glucose. Residues 229–476 (NDTIGTLAGG…ESVEVILSND (248 aa)) form a hexokinase large subdomain region. Residue threonine 253 participates in ADP binding. The D-glucose site is built by asparagine 256, glutamate 284, and glutamate 315. Position 441 (glycine 441) interacts with ADP.

The protein belongs to the hexokinase family. Highly expressed in siliques, at intermediate levels in roots and flowers, and at lower levels in stems, rosette and cauline leaves.

The protein localises to the mitochondrion outer membrane. The enzyme catalyses a D-hexose + ATP = a D-hexose 6-phosphate + ADP + H(+). It carries out the reaction D-fructose + ATP = D-fructose 6-phosphate + ADP + H(+). It catalyses the reaction D-glucose + ATP = D-glucose 6-phosphate + ADP + H(+). It functions in the pathway carbohydrate metabolism; hexose metabolism. The protein operates within carbohydrate degradation; glycolysis; D-glyceraldehyde 3-phosphate and glycerone phosphate from D-glucose: step 1/4. In terms of biological role, fructose and glucose phosphorylating enzyme. May be involved in the phosphorylation of glucose during the export from mitochondrion to cytosol. Acts as a sugar sensor which may regulate sugar-dependent gene repression or activation. Mediates the effects of sugar on plant growth and development independently of its catalytic activity or the sugar metabolism. May regulate the execution of program cell death in plant cells. This Arabidopsis thaliana (Mouse-ear cress) protein is Hexokinase-2 (HXK2).